Reading from the N-terminus, the 122-residue chain is Large ribosomal subunit protein uL14c (122 aa).

This sequence belongs to the universal ribosomal protein uL14 family. Part of the 50S ribosomal subunit.

The protein localises to the plastid. It localises to the chloroplast. Functionally, binds to 23S rRNA. This chain is Large ribosomal subunit protein uL14c, found in Nicotiana sylvestris (Wood tobacco).